Consider the following 246-residue polypeptide: Probable transcriptional regulatory protein CA_C2295 (246 aa).

The protein belongs to the TACO1 family.

The protein resides in the cytoplasm. This Clostridium acetobutylicum (strain ATCC 824 / DSM 792 / JCM 1419 / IAM 19013 / LMG 5710 / NBRC 13948 / NRRL B-527 / VKM B-1787 / 2291 / W) protein is Probable transcriptional regulatory protein CA_C2295.